We begin with the raw amino-acid sequence, 23 residues long: Keratin (23 aa).

The region spanning 1 to 23 (YSSQLAQVQGLIGNVESQLAEIR) is the IF rod domain. Residues 1–23 (YSSQLAQVQGLIGNVESQLAEIR) are coil 2.

It belongs to the intermediate filament family.

This chain is Keratin, found in Cervus elaphus (Red deer).